Consider the following 88-residue polypeptide: FXYD domain-containing ion transport regulator 3 (88 aa).

Positions M1–A20 form a signal peptide, not cleaved. Over M1–R38 the chain is Extracellular. The helical transmembrane segment at V39–G59 threads the bilayer. Residues K60–C88 lie on the Cytoplasmic side of the membrane. The interval Q67–C88 is disordered.

The protein belongs to the FXYD family. As to quaternary structure, regulatory subunit of the sodium/potassium-transporting ATPase which is composed of a catalytic alpha subunit, a non-catalytic beta subunit and an additional regulatory subunit. Interacts with catalytic alpha subunit ATP1A1. Also interacts with non-catalytic beta subunit ATP1B1. Interacts with the ATP1A1-ATP1B1, ATP1A2-ATP1B1 and ATP1A3-ATP1B1 NKA isozymes. In terms of processing, glutathionylated. As to expression, expressed at high levels in heart, skeletal muscle and liver with low levels of expression in breast, brain, lung, stomach and colon. In the gastric gland, mainly expressed in the mucus cells forming the upper part of the gland and is absent from the parietal cells.

The protein resides in the cell membrane. Its function is as follows. Associates with and regulates the activity of the sodium/potassium-transporting ATPase (NKA) which transports Na(+) out of the cell and K(+) into the cell. Reduces glutathionylation of the NKA beta-1 subunit ATP1B1, thus reversing glutathionylation-mediated inhibition of ATP1B1. Induces a hyperpolarization-activated chloride current when expressed in Xenopus oocytes. This Mus musculus (Mouse) protein is FXYD domain-containing ion transport regulator 3 (Fxyd3).